We begin with the raw amino-acid sequence, 277 residues long: Phosphate import ATP-binding protein PstB 2 (277 aa).

An ABC transporter domain is found at 31 to 272; the sequence is IEVPGLNLFY…PAKKQTEDYI (242 aa). 63 to 70 provides a ligand contact to ATP; sequence GPSGCGKS.

This sequence belongs to the ABC transporter superfamily. Phosphate importer (TC 3.A.1.7) family. In terms of assembly, the complex is composed of two ATP-binding proteins (PstB), two transmembrane proteins (PstC and PstA) and a solute-binding protein (PstS).

Its subcellular location is the cell inner membrane. It catalyses the reaction phosphate(out) + ATP + H2O = ADP + 2 phosphate(in) + H(+). Its function is as follows. Part of the ABC transporter complex PstSACB involved in phosphate import. Responsible for energy coupling to the transport system. This is Phosphate import ATP-binding protein PstB 2 from Pseudomonas savastanoi pv. phaseolicola (strain 1448A / Race 6) (Pseudomonas syringae pv. phaseolicola (strain 1448A / Race 6)).